The primary structure comprises 61 residues: Sperm protamine P1 (61 aa).

The tract at residues 1–61 (MARYRHSRSR…RYSRRRRRRY (61 aa)) is disordered.

This sequence belongs to the protamine P1 family. Testis.

It localises to the nucleus. It is found in the chromosome. In terms of biological role, protamines substitute for histones in the chromatin of sperm during the haploid phase of spermatogenesis. They compact sperm DNA into a highly condensed, stable and inactive complex. This Onychogalea fraenata (Bridled nail-tailed wallaby) protein is Sperm protamine P1 (PRM1).